The following is a 615-amino-acid chain: Zinc finger protein 653 (615 aa).

Disordered regions lie at residues 1–48 (MAER…ARRR), 95–117 (RSGR…KRRR), 176–236 (PLSD…SSGL), and 401–432 (EEKE…ELDG). The Nuclear localization signal motif lies at 107–118 (PKKPKRKKRRRR). The span at 108–117 (KKPKRKKRRR) shows a compositional bias: basic residues. The segment covering 193–205 (AGSSDSSSSGSAS) has biased composition (low complexity). A compositionally biased stretch (polar residues) spans 226–236 (TPTSPVGSSGL). A compositionally biased stretch (acidic residues) spans 419 to 432 (AEPEAEADGEELDG). A Nuclear localization signal motif is present at residues 445 to 451 (EPEKRRR). 5 C2H2-type zinc fingers span residues 467–492 (FHCP…NLVH), 498–522 (KVCP…MIIH), 528–550 (FTCE…RRTH), 556–578 (LQCE…MKKH), and 586–609 (FTCD…LKSH).

The protein belongs to the krueppel C2H2-type zinc-finger protein family. Interacts with NR5A1. As to expression, highly expressed in testis, cerebellum, temporal lobe, hippocampus and the adrenal gland. Moderately expressed in spleen, uterus, thymus, pancreas, kidney, stomach and rectum.

It localises to the nucleus. Transcriptional repressor. May repress NR5A1, PPARG, NR1H3, NR4A2, ESR1 and NR3C1 transcriptional activity. In Homo sapiens (Human), this protein is Zinc finger protein 653 (ZNF653).